Here is a 233-residue protein sequence, read N- to C-terminus: Large ribosomal subunit protein uL1 (233 aa).

Belongs to the universal ribosomal protein uL1 family. In terms of assembly, part of the 50S ribosomal subunit.

Its function is as follows. Binds directly to 23S rRNA. The L1 stalk is quite mobile in the ribosome, and is involved in E site tRNA release. Functionally, protein L1 is also a translational repressor protein, it controls the translation of the L11 operon by binding to its mRNA. The sequence is that of Large ribosomal subunit protein uL1 from Geobacillus kaustophilus (strain HTA426).